An 806-amino-acid chain; its full sequence is Fibroblast growth factor receptor 3 (806 aa).

Positions 1–19 (MRAAWGSVWCLCLAAAVGA) are cleaved as a signal peptide. Residues 20 to 364 (LPAARRRGAE…ELMEMDDSGS (345 aa)) lie on the Extracellular side of the membrane. Residues 24 to 124 (RRRGAERSGG…VLGNFTVRVT (101 aa)) enclose the Ig-like C2-type 1 domain. Cys61 and Cys107 form a disulfide bridge. N-linked (GlcNAc...) asparagine glycans are attached at residues Asn83, Asn96, and Asn118. The disordered stretch occupies residues 121–146 (VRVTDSPSSGDDEDDDDESEDTGVPF). A compositionally biased stretch (acidic residues) spans 130–141 (GDDEDDDDESED). Ig-like C2-type domains are found at residues 150–238 (PDKM…YQLD) and 247–349 (PILQ…AWLT). A disulfide bridge links Cys170 with Cys222. Residues Asn219, Asn256, Asn288, Asn309, and Asn322 are each glycosylated (N-linked (GlcNAc...) asparagine). Cys269 and Cys333 are disulfide-bonded. A helical transmembrane segment spans residues 365–389 (VYAGILSYGTGLVLFILVLVIVIIC). At 390-806 (RMKMPNKKAM…HVPCNGVIRT (417 aa)) the chain is on the cytoplasmic side. Residues 466–755 (LTLGKPLGEG…LTMTSTDEYL (290 aa)) form the Protein kinase domain. ATP is bound by residues 472-480 (LGEGCFGQV) and Lys502. The active-site Proton acceptor is Asp611. A phosphotyrosine; by autocatalysis mark is found at Tyr641, Tyr642, Tyr718, and Tyr754.

Belongs to the protein kinase superfamily. Tyr protein kinase family. Fibroblast growth factor receptor subfamily. Monomer. Homodimer after ligand binding. Post-translationally, autophosphorylated. Binding of FGF family members together with heparan sulfate proteoglycan or heparin promotes receptor dimerization and autophosphorylation on tyrosine residues. Autophosphorylation occurs in trans between the two FGFR molecules present in the dimer.

The protein localises to the cell membrane. The enzyme catalyses L-tyrosyl-[protein] + ATP = O-phospho-L-tyrosyl-[protein] + ADP + H(+). Present in an inactive conformation in the absence of bound ligand. Ligand binding leads to dimerization and activation by autophosphorylation on tyrosine residues. Functionally, tyrosine-protein kinase that acts as a cell-surface receptor for fibroblast growth factors and plays an essential role in the regulation of cell proliferation, differentiation and apoptosis. Plays an essential role in the regulation of chondrocyte differentiation, proliferation and apoptosis, and is required for normal skeleton development. Regulates both osteogenesis and postnatal bone mineralization by osteoblasts. Promotes apoptosis in chondrocytes, but can also promote cancer cell proliferation. Phosphorylates PLCG1, CBL and FRS2. Ligand binding leads to the activation of several signaling cascades. Activation of PLCG1 leads to the production of the cellular signaling molecules diacylglycerol and inositol 1,4,5-trisphosphate. Phosphorylation of FRS2 triggers recruitment of GRB2, GAB1, PIK3R1 and SOS1, and mediates activation of RAS, MAPK1/ERK2, MAPK3/ERK1 and the MAP kinase signaling pathway, as well as of the AKT1 signaling pathway. This is Fibroblast growth factor receptor 3 (FGFR3) from Gallus gallus (Chicken).